Consider the following 60-residue polypeptide: Ferredoxin-1 (60 aa).

4Fe-4S ferredoxin-type domains are found at residues 2-27 (LYIT…SAGD) and 28-60 (DIYV…IVQG). Positions 8, 11, 14, 18, 37, 40, 48, and 52 each coordinate [4Fe-4S] cluster.

Requires [4Fe-4S] cluster as cofactor.

Functionally, ferredoxins are iron-sulfur proteins that transfer electrons in a wide variety of metabolic reactions. This is Ferredoxin-1 from Chlorobium limicola.